We begin with the raw amino-acid sequence, 223 residues long: Trichome differentiation protein GL1 (223 aa).

2 consecutive HTH myb-type domains span residues 11-63 (NQEY…MNYL) and 64-118 (SPNV…SKKL). DNA-binding regions (H-T-H motif) lie at residues 39–63 (WNRI…MNYL) and 91–114 (WSLI…NTHL).

It is found in the nucleus. Functionally, regulates the production of a signal that induces hair (trichome) precursor cells on leaf primordia to differentiate. This is Trichome differentiation protein GL1 (GL1) from Arabidopsis lyrata (Lyre-leaved rock-cress).